We begin with the raw amino-acid sequence, 474 residues long: tRNA-2-methylthio-N(6)-dimethylallyladenosine synthase (474 aa).

Positions 3-120 (KKLHIKTWGC…LPEMINSVRG (118 aa)) constitute an MTTase N-terminal domain. 6 residues coordinate [4Fe-4S] cluster: cysteine 12, cysteine 49, cysteine 83, cysteine 157, cysteine 161, and cysteine 164. Residues 143–375 (RADGPTAFVS…QDRINQQTTA (233 aa)) form the Radical SAM core domain. The TRAM domain occupies 378–441 (RRKLGTVQRI…ANSLRGMLLR (64 aa)).

It belongs to the methylthiotransferase family. MiaB subfamily. Monomer. [4Fe-4S] cluster is required as a cofactor.

It is found in the cytoplasm. The enzyme catalyses N(6)-dimethylallyladenosine(37) in tRNA + (sulfur carrier)-SH + AH2 + 2 S-adenosyl-L-methionine = 2-methylsulfanyl-N(6)-dimethylallyladenosine(37) in tRNA + (sulfur carrier)-H + 5'-deoxyadenosine + L-methionine + A + S-adenosyl-L-homocysteine + 2 H(+). Catalyzes the methylthiolation of N6-(dimethylallyl)adenosine (i(6)A), leading to the formation of 2-methylthio-N6-(dimethylallyl)adenosine (ms(2)i(6)A) at position 37 in tRNAs that read codons beginning with uridine. This chain is tRNA-2-methylthio-N(6)-dimethylallyladenosine synthase, found in Erwinia tasmaniensis (strain DSM 17950 / CFBP 7177 / CIP 109463 / NCPPB 4357 / Et1/99).